A 2176-amino-acid chain; its full sequence is Protein eyes shut (2176 aa).

The Cytoplasmic portion of the chain corresponds to 1–122; that stretch reads MSNVHQFDTQ…NPNILLPTLR (122 aa). A helical transmembrane segment spans residues 123-143; sequence ILARGLLLPALILAILVGSSQ. Residues 144–180 form the EGF-like 1 domain; the sequence is AGFACLSNPCVFGVCIDGLNSSYSCYCIDGYTGIQCQ. Residues 144–2176 are Extracellular-facing; sequence AGFACLSNPC…DLHGDEPLTV (2033 aa). 21 disulfide bridges follow: Cys148–Cys158, Cys153–Cys168, Cys170–Cys179, Cys186–Cys197, Cys191–Cys206, Cys208–Cys217, Cys224–Cys235, Cys229–Cys244, Cys246–Cys255, Cys262–Cys276, Cys270–Cys286, Cys288–Cys297, Cys304–Cys315, Cys309–Cys324, Cys326–Cys335, Cys342–Cys353, Cys347–Cys362, Cys364–Cys373, Cys380–Cys392, Cys386–Cys401, and Cys403–Cys412. N-linked (GlcNAc...) asparagine glycosylation occurs at Asn163. One can recognise an EGF-like 2; calcium-binding domain in the interval 182–218; it reads NWDECWSSPCQNGGTCVDGVAYYNCTCPEGFSGSNCE. The N-linked (GlcNAc...) asparagine glycan is linked to Asn205. The 37-residue stretch at 220–256 folds into the EGF-like 3; calcium-binding domain; the sequence is NVDECMSNPCQNGGLCRDRTNGYICTCQPGYLGSHCE. One can recognise an EGF-like 4 domain in the interval 258–298; sequence DVAVCETGTGARCQHGGECIEGPGLEFTCDCPAGWHGRICQ. In terms of domain architecture, EGF-like 5; calcium-binding spans 300 to 336; sequence EINECASSPCQNGGVCVDKLAAYACACPMGYTGINCE. An EGF-like 6 domain is found at 338-374; that stretch reads EILICADNPCQNNALCLMEEGVPTCYCVPDYHGEKCE. The EGF-like 7; calcium-binding domain occupies 376 to 413; sequence QYDECQLGPRCMNGGVCIDGVDTFSCSCPPLLTGMLCE. An N-linked (GlcNAc...) asparagine glycan is attached at Asn425. 2 stretches are compositionally biased toward low complexity: residues 429 to 447 and 482 to 502; these read PATQ…MAPP and VTSV…VSVE. 5 disordered regions span residues 429 to 465, 482 to 639, 757 to 783, 802 to 854, and 902 to 1014; these read PATQ…SRAS, VTSV…RPTA, RFTT…LPTP, LITT…VEIT, and APPA…GVPE. Positions 514 to 526 are enriched in polar residues; that stretch reads GSHSISVEQTTAV. Positions 548-560 are enriched in acidic residues; that stretch reads SASESETETEEEI. Low complexity-rich tracts occupy residues 564–582 and 596–632; these read TTAR…ESPS and TSAS…SEEV. The segment covering 757–775 has biased composition (polar residues); the sequence is RFTTVQPPAGVTTTSPTED. The segment covering 811–820 has biased composition (basic residues); it reads THHHHHHHPH. Pro residues-rich tracts occupy residues 904-922 and 930-955; these read PATP…PSPP and TLPP…PTPP. An EGF-like 8 domain is found at 1018 to 1054; that stretch reads GDVDCIKLGCYNGGTCVTTSEGSRCVCRFDRQGPLCE. Cystine bridges form between Cys1022-Cys1033, Cys1027-Cys1042, and Cys1044-Cys1053. One can recognise a Laminin G-like 1 domain in the interval 1059-1266; the sequence is IRNAAFSGDS…GITECGSLAC (208 aa). N-linked (GlcNAc...) asparagine glycans are attached at residues Asn1165, Asn1170, and Asn1176. The region spanning 1309 to 1346 is the EGF-like 9 domain; that stretch reads EISVCEDNPCQYGGTCVQFPGSGYLCLCPLGKHGHYCE. Intrachain disulfides connect Cys1313–Cys1324, Cys1318–Cys1334, and Cys1336–Cys1345. The Laminin G-like 2 domain occupies 1353 to 1549; that stretch reads LPSFSGSVNG…GVGQCGTREC (197 aa). N-linked (GlcNAc...) asparagine glycosylation is present at Asn1471. EGF-like domains are found at residues 1545-1581 and 1583-1621; these read GTRE…PLCA and PTNP…KNCE. 6 disulfides stabilise this stretch: Cys1549/Cys1560, Cys1554/Cys1569, Cys1571/Cys1580, Cys1587/Cys1600, Cys1594/Cys1609, and Cys1611/Cys1620. Asn1665 and Asn1861 each carry an N-linked (GlcNAc...) asparagine glycan. Positions 1692-1879 constitute a Laminin G-like 3 domain; sequence EKQRSFSPVP…NIRDCDGTAC (188 aa). EGF-like domains are found at residues 1875–1912 and 1913–1946; these read DGTA…DRCE and YSET…FYCE. Cystine bridges form between Cys1879/Cys1890, Cys1884/Cys1900, Cys1902/Cys1911, Cys1917/Cys1928, Cys1922/Cys1934, and Cys1936/Cys1945. A Laminin G-like 4 domain is found at 1952 to 2166; it reads PTTPSFRGNS…TYQGENIGSC (215 aa). N-linked (GlcNAc...) asparagine glycans are attached at residues Asn1994, Asn2035, and Asn2099. Residues 2080 to 2101 are disordered; sequence GGRSLGSTTPRSTLAGRRKNSS.

It belongs to the EYS family. As to expression, expressed from the beginning of rhabdomere biogenesis (48 hours after pupal formation), when it decorates the entire photoreceptor apical surface.

The protein localises to the membrane. Its subcellular location is the secreted. Essential for the formation of matrix-filled interrhabdomeral space: critical for the formation of epithelial lumina in the retina. Acts together with prominin (prom) and the cell adhesion molecule chaoptin (chp) to choreograph the partitioning of rhabdomeres into an open system. In Drosophila melanogaster (Fruit fly), this protein is Protein eyes shut.